Consider the following 222-residue polypeptide: Methylthioribulose-1-phosphate dehydratase (222 aa).

Histidine 94 and histidine 96 together coordinate Zn(2+).

It belongs to the aldolase class II family. MtnB subfamily. Zn(2+) serves as cofactor.

It carries out the reaction 5-(methylsulfanyl)-D-ribulose 1-phosphate = 5-methylsulfanyl-2,3-dioxopentyl phosphate + H2O. The protein operates within amino-acid biosynthesis; L-methionine biosynthesis via salvage pathway; L-methionine from S-methyl-5-thio-alpha-D-ribose 1-phosphate: step 2/6. Catalyzes the dehydration of methylthioribulose-1-phosphate (MTRu-1-P) into 2,3-diketo-5-methylthiopentyl-1-phosphate (DK-MTP-1-P). This chain is Methylthioribulose-1-phosphate dehydratase, found in Yersinia pseudotuberculosis serotype O:1b (strain IP 31758).